The primary structure comprises 842 residues: Alpha-glucan phosphorylase, H isozyme (842 aa).

An N6-(pyridoxal phosphate)lysine modification is found at lysine 688.

This sequence belongs to the glycogen phosphorylase family. Requires pyridoxal 5'-phosphate as cofactor.

Its subcellular location is the cytoplasm. The catalysed reaction is [(1-&gt;4)-alpha-D-glucosyl](n) + phosphate = [(1-&gt;4)-alpha-D-glucosyl](n-1) + alpha-D-glucose 1-phosphate. Its function is as follows. Phosphorylase is an important allosteric enzyme in carbohydrate metabolism. Enzymes from different sources differ in their regulatory mechanisms and in their natural substrates. However, all known phosphorylases share catalytic and structural properties. In terms of biological role, the H isoform exhibits higher affinity for branched polyglucans such as soluble starch or glycogen. The sequence is that of Alpha-glucan phosphorylase, H isozyme from Vicia faba (Broad bean).